The primary structure comprises 295 residues: MAITFKQVDFTYQPGTPFETKALTDINVTIPTGSYTALIGHTGSGKSTLLQHLNALLKPTSGTVTIGERVITPTTSNKDLKRLRQHVGIVFQFPESQLFEETVAKDIAFGPQNFGASEADALKTAAEMLALVGLDESLLTRSPFDLSGGQMRRVAIAGVLAMQPQVLVLDEPTAGLDPQGRLDMMEMFARLRHERDLTVVLVTHQMDDVANYADNVIVMDRGQIVKTGTPREIFKDPAWLTAHQLGLPKTTAFAHTLQKQGWQFNEWPLTEDELAAAIVQQLPPNAMGEVAAHDE.

An ABC transporter domain is found at 3–246; the sequence is ITFKQVDFTY…PAWLTAHQLG (244 aa). Residue 40-47 coordinates ATP; the sequence is GHTGSGKS.

It belongs to the ABC transporter superfamily. Energy-coupling factor EcfA family. In terms of assembly, forms a stable energy-coupling factor (ECF) transporter complex composed of 2 membrane-embedded substrate-binding proteins (S component), 2 ATP-binding proteins (A component) and 2 transmembrane proteins (T component).

It localises to the cell membrane. ATP-binding (A) component of a common energy-coupling factor (ECF) ABC-transporter complex. Unlike classic ABC transporters this ECF transporter provides the energy necessary to transport a number of different substrates. This chain is Energy-coupling factor transporter ATP-binding protein EcfA2, found in Lactiplantibacillus plantarum (strain ATCC BAA-793 / NCIMB 8826 / WCFS1) (Lactobacillus plantarum).